An 803-amino-acid chain; its full sequence is Dynein axonemal intermediate chain 4 (803 aa).

Residues 1-33 (MPSSPTSTRKQTNFTASVSAQSRKSISFGNPKS) show a composition bias toward polar residues. Disordered stretches follow at residues 1-41 (MPSS…GYAG), 88-109 (LYHP…SQEG), and 143-163 (STVS…LEDP). Low complexity predominate over residues 143-155 (STVSKSSISTTES). WD repeat units lie at residues 492–532 (QSPY…NTPV), 541–589 (KHLG…DCHD), 616–656 (SRQA…QYLE), 660–700 (GHKG…PFFT), 703–742 (PTTY…LDPL), and 748–787 (NPGI…TPTE).

In terms of assembly, part of the multisubunit axonemal dynein complex formed at least of two heavy chains and a number of intermediate and light chains. Associated with axonemal dynein subunits such as, DNAH2, DNAI3, and DYNLT1. Interacts with DYNLT1.

It localises to the cytoplasm. Its subcellular location is the cytoskeleton. It is found in the flagellum axoneme. The protein localises to the cilium axoneme. The protein resides in the dynein axonemal particle. Functionally, plays a critical role in the assembly of axonemal dynein complex, thereby playing a role in ciliary motility. The sequence is that of Dynein axonemal intermediate chain 4 from Rattus norvegicus (Rat).